Reading from the N-terminus, the 720-residue chain is ATP-dependent RNA helicase glh-3 (720 aa).

Polar residues predominate over residues 1 to 11; sequence MDKSPTKTSIR. Disordered regions lie at residues 1–34 and 125–180; these read MDKS…SCIK and LNSR…SYGN. Composition is skewed to basic and acidic residues over residues 141 to 154 and 162 to 172; these read NVKE…RSDD and SAKDEERDRDS. 2 CCHC-type zinc fingers span residues 202–219 and 222–239; these read NTCF…ECSA and RECA…ECAS. The Q motif signature appears at 298-326; sequence KSFSDSDIPQSMRRNVERAGYTRTTPIQQ. The region spanning 329–513 is the Helicase ATP-binding domain; it reads LPLVADGKDI…RKLLREDYTM (185 aa). Residue 342 to 349 coordinates ATP; the sequence is AQTGSGKT. The DEAD box signature appears at 456-459; it reads DEAD. One can recognise a Helicase C-terminal domain in the interval 549–698; sequence DIDTYTTEKN…VVPSWMKEAA (150 aa). Positions 696-720 are disordered; that stretch reads EAAGGTSNPNKFEKSIDTEEPEEAW.

This sequence belongs to the DEAD box helicase family. DDX4/VASA subfamily. As to quaternary structure, interacts with csn-5. Interacts (via C-terminus) with kgb-1. Interacts with zyx-1.

The protein localises to the cytoplasm. The catalysed reaction is ATP + H2O = ADP + phosphate + H(+). Functionally, probable ATP-binding RNA helicase. This is ATP-dependent RNA helicase glh-3 from Caenorhabditis elegans.